Consider the following 37-residue polypeptide: Large ribosomal subunit protein bL36 (37 aa).

This sequence belongs to the bacterial ribosomal protein bL36 family.

The protein is Large ribosomal subunit protein bL36 of Janthinobacterium sp. (strain Marseille) (Minibacterium massiliensis).